The primary structure comprises 691 residues: Zinc finger protein 770 (691 aa).

A Glycyl lysine isopeptide (Lys-Gly) (interchain with G-Cter in SUMO2) cross-link involves residue Lys-11. 3 consecutive C2H2-type zinc fingers follow at residues 27–49 (YVCN…YLIH), 55–77 (FECD…QLTH), and 81–103 (FKCS…QQLH). Glycyl lysine isopeptide (Lys-Gly) (interchain with G-Cter in SUMO2) cross-links involve residues Lys-112, Lys-121, and Lys-146. C2H2-type zinc fingers lie at residues 160-182 (HACT…VLIH), 188-210 (FKCV…QLTH), and 216-238 (FQCC…KQIH). A disordered region spans residues 258-277 (PLPNKLNANQGGFENGEIGE). A Glycyl lysine isopeptide (Lys-Gly) (interchain with G-Cter in SUMO2) cross-link involves residue Lys-262. A C2H2-type 7; degenerate zinc finger spans residues 294–318 (FQCPKCEKCFESEQILNEHSCFAAR). Glycyl lysine isopeptide (Lys-Gly) (interchain with G-Cter in SUMO2) cross-links involve residues Lys-420 and Lys-437. 4 C2H2-type zinc fingers span residues 475–497 (CPCD…YLIH), 503–525 (FGCN…EQTH), 625–647 (YRCS…YLIH), and 653–675 (FECS…QLTH). Lys-683 participates in a covalent cross-link: Glycyl lysine isopeptide (Lys-Gly) (interchain with G-Cter in SUMO2).

The protein belongs to the krueppel C2H2-type zinc-finger protein family.

It localises to the nucleus. Its function is as follows. May be involved in transcriptional regulation. In Homo sapiens (Human), this protein is Zinc finger protein 770 (ZNF770).